An 85-amino-acid polypeptide reads, in one-letter code: Cell division topological specificity factor (85 aa).

Belongs to the MinE family.

In terms of biological role, prevents the cell division inhibition by proteins MinC and MinD at internal division sites while permitting inhibition at polar sites. This ensures cell division at the proper site by restricting the formation of a division septum at the midpoint of the long axis of the cell. This Shewanella sp. (strain ANA-3) protein is Cell division topological specificity factor.